We begin with the raw amino-acid sequence, 804 residues long: Endoplasmin (804 aa).

Positions 1-21 are cleaved as a signal peptide; that stretch reads MRVLWVLGLCCVLLTFGFVRA. The short motif at 42-44 is the SRT pseudosubstrate motif element; the sequence is SRT. N-linked (GlcNAc...) asparagine glycosylation occurs at Asn62. A Phosphoserine modification is found at Ser64. N-linked (GlcNAc...) asparagine glycosylation is present at Asn107. The ATP site is built by Asn107, Asp149, and Asn162. Lys168 carries the N6-(2-hydroxyisobutyryl)lysine modification. Ser172 carries the phosphoserine modification. An ATP-binding site is contributed by Phe199. Residue Asn217 is glycosylated (N-linked (GlcNAc...) asparagine). The tract at residues 288–323 is disordered; it reads TVEEPLEEDETAQEEKEEADDEAAVEEEEEEKKPKT. The segment covering 289 to 317 has biased composition (acidic residues); it reads VEEPLEEDETAQEEKEEADDEAAVEEEEE. The residue at position 403 (Ser403) is a Phosphoserine. Lys404 is subject to N6-succinyllysine. Asn445 is a glycosylation site (N-linked (GlcNAc...) asparagine). Ser447 carries the phosphoserine modification. Lys479 carries the N6-acetyllysine modification. Asn481 and Asn502 each carry an N-linked (GlcNAc...) asparagine glycan. The residue at position 633 (Lys633) is an N6-succinyllysine. The disordered stretch occupies residues 749 to 804; it reads IDPEAQVEEEPEEEPEDTTEDTTDDSEQDEEETDAGAEEEEEEQETEKEPTEKDEL. Residues 753–794 show a composition bias toward acidic residues; sequence AQVEEEPEEEPEDTTEDTTDDSEQDEEETDAGAEEEEEEQET. The segment covering 795–804 has biased composition (basic and acidic residues); the sequence is EKEPTEKDEL. Positions 801–804 match the Prevents secretion from ER motif; that stretch reads KDEL.

This sequence belongs to the heat shock protein 90 family. As to quaternary structure, homodimer; disulfide-linked. Component of an EIF2 complex at least composed of CELF1/CUGBP1, CALR, CALR3, EIF2S1, EIF2S2, HSP90B1 and HSPA5. Part of a large chaperone multiprotein complex comprising DNAJB11, HSP90B1, HSPA5, HYOU, PDIA2, PDIA4, PDIA6, PPIB, SDF2L1, UGGT1 and very small amounts of ERP29, but not, or at very low levels, CALR nor CANX. Interacts with AIMP1; regulates its retention in the endoplasmic reticulum. Hyperglycosylated form interacts with OS9; promoting its degradation by the endoplasmic reticulum associated degradation (ERAD). Interacts with CNPY3. This interaction is disrupted in the presence of ATP. Interacts with TLR4 and TLR9, but not with TLR3. Interacts with MZB1 in a calcium-dependent manner. Interacts with METTL23. Interacts with IL1B; the interaction facilitates cargo translocation into the ERGIC. Interacts with EIF2AK3. Post-translationally, phosphorylated by CK2. In terms of processing, N-glycosylated cotranslationally at Asn-217 by STT3A-containing OST-A complex: this glycosylation is constitutive. In response to various stress, 5 additional facultative sites (Asn-62, Asn-107, Asn-445, Asn-481 and Asn-502) can be glycosylated post-translationally by STT3B-containing OST-B complex, leading to a hyperglycosylated form that is degraded by the ER-associated degradation (ERAD) pathway. In normal conditions, the OST-A complex together with CCDC134 prevent glycosylation at facultative sites during protein folding, thereby preventing hyperglycosylation. Mechanistically, nascent HSP90B1 is tethered during translation to a specialized CCDC134-containing translocon that forms a microenvironment for its folding, in which STT3A associates with the SRT pseudosubstrate motif, and prevents access to facultative glycosylation sites until folding is completed, rendering its facultative sites inaccessible to the OST-B complex.

The protein resides in the endoplasmic reticulum lumen. Its subcellular location is the sarcoplasmic reticulum lumen. It localises to the melanosome. The enzyme catalyses ATP + H2O = ADP + phosphate + H(+). Its function is as follows. ATP-dependent chaperone involved in the processing of proteins in the endoplasmic reticulum, regulating their transport. Together with MESD, acts as a modulator of the Wnt pathway by promoting the folding of LRP6, a coreceptor of the canonical Wnt pathway. When associated with CNPY3, required for proper folding of Toll-like receptors. Promotes folding and trafficking of TLR4 to the cell surface. May participate in the unfolding of cytosolic leaderless cargos (lacking the secretion signal sequence) such as the interleukin 1/IL-1 to facilitate their translocation into the ERGIC (endoplasmic reticulum-Golgi intermediate compartment) and secretion; the translocation process is mediated by the cargo receptor TMED10. In Rattus norvegicus (Rat), this protein is Endoplasmin.